The primary structure comprises 325 residues: Hydroxymethylglutaryl-CoA lyase, mitochondrial (325 aa).

A mitochondrion-targeting transit peptide spans 1-27; the sequence is MAAMRKALPRRLVGLASLRAVSTSSMG. The 268-residue stretch at 33–300 folds into the Pyruvate carboxyltransferase domain; the sequence is VKIVEVGPRD…HTGVNLQKLL (268 aa). Position 41 (arginine 41) interacts with substrate. An a divalent metal cation-binding site is contributed by aspartate 42. Lysine 48 carries the N6-acetyllysine; alternate modification. Lysine 48 is subject to N6-succinyllysine; alternate. The residue at position 111 (lysine 111) is an N6-acetyllysine. Lysine 137 and lysine 179 each carry N6-acetyllysine; alternate. Lysine 137 and lysine 179 each carry N6-succinyllysine; alternate. A divalent metal cation is bound by residues histidine 233 and histidine 235. Residue cysteine 266 is part of the active site. Asparagine 275 serves as a coordination point for a divalent metal cation. The Microbody targeting signal motif lies at 323–325; that stretch reads CKL. N6-acetyllysine is present on lysine 324.

It belongs to the HMG-CoA lyase family. As to quaternary structure, homodimer; disulfide-linked. Can also form homotetramers. A divalent metal cation serves as cofactor. Highest expression in liver. Expressed in pancreas, kidney, intestine, testis, fibroblasts and lymphoblasts. Very low expression in brain and skeletal muscle. The relative expression of isoform 2 (at mRNA level) is highest in heart (30%), skeletal muscle (22%), and brain (14%).

It localises to the mitochondrion matrix. It is found in the peroxisome. It carries out the reaction (3S)-3-hydroxy-3-methylglutaryl-CoA = acetoacetate + acetyl-CoA. It participates in metabolic intermediate metabolism; (S)-3-hydroxy-3-methylglutaryl-CoA degradation; acetoacetate from (S)-3-hydroxy-3-methylglutaryl-CoA: step 1/1. With respect to regulation, stimulated by reducing agents such as dithiothreitol (DTT). In terms of biological role, mitochondrial 3-hydroxy-3-methylglutaryl-CoA lyase that catalyzes a cation-dependent cleavage of (S)-3-hydroxy-3-methylglutaryl-CoA into acetyl-CoA and acetoacetate, a key step in ketogenesis. Terminal step in leucine catabolism. Ketone bodies (beta-hydroxybutyrate, acetoacetate and acetone) are essential as an alternative source of energy to glucose, as lipid precursors and as regulators of metabolism. In Homo sapiens (Human), this protein is Hydroxymethylglutaryl-CoA lyase, mitochondrial (HMGCL).